Here is an 814-residue protein sequence, read N- to C-terminus: Putative E3 ubiquitin-protein ligase RF298 (814 aa).

Disordered stretches follow at residues M1 to T51, S221 to A301, and A411 to P441. Positions S221–S231 are enriched in low complexity. A compositionally biased stretch (polar residues) spans S289–A301. Residues S423 to P435 show a composition bias toward basic and acidic residues. The stretch at E506–A710 forms a coiled coil. An RING-type zinc finger spans residues C760 to R800.

Belongs to the RING-type zinc finger family.

The enzyme catalyses S-ubiquitinyl-[E2 ubiquitin-conjugating enzyme]-L-cysteine + [acceptor protein]-L-lysine = [E2 ubiquitin-conjugating enzyme]-L-cysteine + N(6)-ubiquitinyl-[acceptor protein]-L-lysine.. Its pathway is protein modification; protein ubiquitination. The chain is Putative E3 ubiquitin-protein ligase RF298 (RF298) from Arabidopsis thaliana (Mouse-ear cress).